We begin with the raw amino-acid sequence, 423 residues long: Methanol:N,N-dimethyl-4-nitrosoaniline oxidoreductase (423 aa).

This sequence belongs to the iron-containing alcohol dehydrogenase family. Homodecamer. Requires Mg(2+) as cofactor. Zn(2+) is required as a cofactor. NADPH serves as cofactor.

The catalysed reaction is methanol + A = formaldehyde + AH2. Catalyzes the oxidation of methanol to yield formaldehyde. While the in vivo electron acceptor is not known, N,N-dimethyl-4-nitrosoaniline (NDMA) can serve this function in vitro and is reduced to 4-(hydroxylamino)-N,N-dimethylaniline. The protein is Methanol:N,N-dimethyl-4-nitrosoaniline oxidoreductase (thcE) of Rhodococcus erythropolis (Arthrobacter picolinophilus).